A 173-amino-acid polypeptide reads, in one-letter code: MDVTIQHPWFKRALGPFYPSRLFDQFFGEGLFEYDLLPFLSSTISPYYRQSLFRTVLDSGISEVRSDRDKFVIFLDVKHFSPEDLTVKVLEDFVEIHGKHNERQDDHGYISREFHRRYRLPSNVDQSALSCSLSADGMLTFSGPKVQSGLDAGHSERAIPVSREEKPSSAPSS.

N-acetylmethionine is present on Met1. The segment at 1–63 (MDVTIQHPWF…RTVLDSGISE (63 aa)) is required for complex formation with BFSP1 and BFSP2. Gln6 is subject to Deamidated glutamine; partial. The residue at position 45 (Ser45) is a Phosphoserine. A Deamidated glutamine; partial modification is found at Gln50. The region spanning 52 to 162 (LFRTVLDSGI…GHSERAIPVS (111 aa)) is the sHSP domain. Lys70 and Lys99 each carry N6-acetyllysine. His100 is a binding site for Zn(2+). The residue at position 101 (Asn101) is a Deamidated asparagine; partial. Zn(2+) contacts are provided by Glu102 and His107. At Ser122 the chain carries Phosphoserine. The residue at position 123 (Asn123) is a Deamidated asparagine; partial. Positions 145–173 (KVQSGLDAGHSERAIPVSREEKPSSAPSS) are disordered. Gln147 bears the Deamidated glutamine; partial mark. Over residues 153 to 167 (GHSERAIPVSREEKP) the composition is skewed to basic and acidic residues. His154 is a binding site for Zn(2+). A glycan (O-linked (GlcNAc) serine) is linked at Ser162.

This sequence belongs to the small heat shock protein (HSP20) family. As to quaternary structure, heteromer composed of three CRYAA and one CRYAB subunits. Inter-subunit bridging via zinc ions enhances stability, which is crucial as there is no protein turn over in the lens. Can also form homodimers and homotetramers (dimers of dimers) which serve as the building blocks of homooligomers. Within homooligomers, the zinc-binding motif is created from residues of 3 different molecules. His-100 and Glu-102 from one molecule are ligands of the zinc ion, and His-107 and His-154 residues from additional molecules complete the site with tetrahedral coordination geometry. Part of a complex required for lens intermediate filament formation composed of BFSP1, BFSP2 and CRYAA. Post-translationally, acetylation at Lys-70 may increase chaperone activity. In terms of processing, undergoes age-dependent proteolytical cleavage at the C-terminus.

It localises to the cytoplasm. Its subcellular location is the nucleus. In terms of biological role, contributes to the transparency and refractive index of the lens. Acts as a chaperone, preventing aggregation of various proteins under a wide range of stress conditions. Required for the correct formation of lens intermediate filaments as part of a complex composed of BFSP1, BFSP2 and CRYAA. The sequence is that of Alpha-crystallin A chain (CRYAA) from Meriones unguiculatus (Mongolian jird).